Reading from the N-terminus, the 215-residue chain is Cytochrome b6 (215 aa).

A helical transmembrane segment spans residues 32–52 (IFYCLGGITLVCFLIQFATGF). Cysteine 35 contacts heme c. 2 residues coordinate heme b: histidine 86 and histidine 100. Helical transmembrane passes span 90–110 (ASMM…TGGF), 116–136 (LTWV…VTGY), and 186–206 (AHTF…FLMI). Heme b contacts are provided by histidine 187 and histidine 202.

The protein belongs to the cytochrome b family. PetB subfamily. In terms of assembly, the 4 large subunits of the cytochrome b6-f complex are cytochrome b6, subunit IV (17 kDa polypeptide, PetD), cytochrome f and the Rieske protein, while the 4 small subunits are PetG, PetL, PetM and PetN. The complex functions as a dimer. Heme b is required as a cofactor. Heme c serves as cofactor.

The protein resides in the cellular thylakoid membrane. In terms of biological role, component of the cytochrome b6-f complex, which mediates electron transfer between photosystem II (PSII) and photosystem I (PSI), cyclic electron flow around PSI, and state transitions. The sequence is that of Cytochrome b6 from Nostoc punctiforme (strain ATCC 29133 / PCC 73102).